A 301-amino-acid chain; its full sequence is Acetylglutamate kinase (301 aa).

Residues 68–69, Arg-90, and Asn-195 each bind substrate; that span reads GG.

This sequence belongs to the acetylglutamate kinase family. ArgB subfamily.

The protein localises to the cytoplasm. It carries out the reaction N-acetyl-L-glutamate + ATP = N-acetyl-L-glutamyl 5-phosphate + ADP. Its pathway is amino-acid biosynthesis; L-arginine biosynthesis; N(2)-acetyl-L-ornithine from L-glutamate: step 2/4. In terms of biological role, catalyzes the ATP-dependent phosphorylation of N-acetyl-L-glutamate. In Pseudomonas entomophila (strain L48), this protein is Acetylglutamate kinase.